Consider the following 190-residue polypeptide: Elongation factor P (190 aa).

The protein belongs to the elongation factor P family.

The protein resides in the cytoplasm. It participates in protein biosynthesis; polypeptide chain elongation. Its function is as follows. Involved in peptide bond synthesis. Stimulates efficient translation and peptide-bond synthesis on native or reconstituted 70S ribosomes in vitro. Probably functions indirectly by altering the affinity of the ribosome for aminoacyl-tRNA, thus increasing their reactivity as acceptors for peptidyl transferase. The sequence is that of Elongation factor P from Pseudomonas fluorescens (strain ATCC BAA-477 / NRRL B-23932 / Pf-5).